A 181-amino-acid chain; its full sequence is High mobility group protein B4 (181 aa).

The segment at residues 9–79 (PKVNVSSYIH…RYQQEMMNYI (71 aa)) is a DNA-binding region (HMG box 1). Basic residues predominate over residues 80 to 89 (GKRRKRRKRD). The interval 80-100 (GKRRKRRKRDPKAPRKPPSSF) is disordered. The HMG box 2 DNA-binding region spans 93–161 (PRKPPSSFLL…KYFEEQEAYR (69 aa)).

Belongs to the HMGB family. In terms of tissue distribution, expressed in adult germ cells (at protein level).

The protein localises to the nucleus. It localises to the chromosome. The sequence is that of High mobility group protein B4 (Hmgb4) from Mus musculus (Mouse).